Here is a 121-residue protein sequence, read N- to C-terminus: Ribosome-binding factor A (121 aa).

This sequence belongs to the RbfA family. In terms of assembly, monomer. Binds 30S ribosomal subunits, but not 50S ribosomal subunits or 70S ribosomes.

Its subcellular location is the cytoplasm. Its function is as follows. One of several proteins that assist in the late maturation steps of the functional core of the 30S ribosomal subunit. Associates with free 30S ribosomal subunits (but not with 30S subunits that are part of 70S ribosomes or polysomes). Required for efficient processing of 16S rRNA. May interact with the 5'-terminal helix region of 16S rRNA. The sequence is that of Ribosome-binding factor A from Hydrogenovibrio crunogenus (strain DSM 25203 / XCL-2) (Thiomicrospira crunogena).